Reading from the N-terminus, the 206-residue chain is Large ribosomal subunit protein uL4 (206 aa).

It belongs to the universal ribosomal protein uL4 family. In terms of assembly, part of the 50S ribosomal subunit.

Functionally, one of the primary rRNA binding proteins, this protein initially binds near the 5'-end of the 23S rRNA. It is important during the early stages of 50S assembly. It makes multiple contacts with different domains of the 23S rRNA in the assembled 50S subunit and ribosome. Its function is as follows. Forms part of the polypeptide exit tunnel. This is Large ribosomal subunit protein uL4 from Methylocella silvestris (strain DSM 15510 / CIP 108128 / LMG 27833 / NCIMB 13906 / BL2).